We begin with the raw amino-acid sequence, 287 residues long: mRNA-capping enzyme small subunit (287 aa).

In terms of assembly, heterodimer of a large and a small subunit.

It localises to the virion. The enzyme catalyses a 5'-end (5'-triphosphoguanosine)-ribonucleoside in mRNA + S-adenosyl-L-methionine = a 5'-end (N(7)-methyl 5'-triphosphoguanosine)-ribonucleoside in mRNA + S-adenosyl-L-homocysteine. Its function is as follows. Catalyzes the last reaction in the mRNA cap formation pathway. The chain is mRNA-capping enzyme small subunit from Erythrocebus patas (Red guenon).